The sequence spans 312 residues: Ribonuclease Z (312 aa).

Zn(2+)-binding residues include His-62, His-64, Asp-66, His-67, His-144, Asp-215, and His-273. The Proton acceptor role is filled by Asp-66.

Belongs to the RNase Z family. Homodimer. Requires Zn(2+) as cofactor.

It carries out the reaction Endonucleolytic cleavage of RNA, removing extra 3' nucleotides from tRNA precursor, generating 3' termini of tRNAs. A 3'-hydroxy group is left at the tRNA terminus and a 5'-phosphoryl group is left at the trailer molecule.. Zinc phosphodiesterase, which displays some tRNA 3'-processing endonuclease activity. Probably involved in tRNA maturation, by removing a 3'-trailer from precursor tRNA. This is Ribonuclease Z from Prochlorococcus marinus (strain AS9601).